A 258-amino-acid polypeptide reads, in one-letter code: Imidazole glycerol phosphate synthase subunit HisF (258 aa).

Residues aspartate 12 and aspartate 131 contribute to the active site.

This sequence belongs to the HisA/HisF family. In terms of assembly, heterodimer of HisH and HisF.

The protein resides in the cytoplasm. It catalyses the reaction 5-[(5-phospho-1-deoxy-D-ribulos-1-ylimino)methylamino]-1-(5-phospho-beta-D-ribosyl)imidazole-4-carboxamide + L-glutamine = D-erythro-1-(imidazol-4-yl)glycerol 3-phosphate + 5-amino-1-(5-phospho-beta-D-ribosyl)imidazole-4-carboxamide + L-glutamate + H(+). Its pathway is amino-acid biosynthesis; L-histidine biosynthesis; L-histidine from 5-phospho-alpha-D-ribose 1-diphosphate: step 5/9. Its function is as follows. IGPS catalyzes the conversion of PRFAR and glutamine to IGP, AICAR and glutamate. The HisF subunit catalyzes the cyclization activity that produces IGP and AICAR from PRFAR using the ammonia provided by the HisH subunit. The polypeptide is Imidazole glycerol phosphate synthase subunit HisF (Nitrosomonas europaea (strain ATCC 19718 / CIP 103999 / KCTC 2705 / NBRC 14298)).